The chain runs to 253 residues: 5'-nucleotidase SurE (253 aa).

Positions 8, 9, 39, and 92 each coordinate a divalent metal cation.

It belongs to the SurE nucleotidase family. A divalent metal cation serves as cofactor.

The protein resides in the cytoplasm. The catalysed reaction is a ribonucleoside 5'-phosphate + H2O = a ribonucleoside + phosphate. In terms of biological role, nucleotidase that shows phosphatase activity on nucleoside 5'-monophosphates. The chain is 5'-nucleotidase SurE from Burkholderia vietnamiensis (strain G4 / LMG 22486) (Burkholderia cepacia (strain R1808)).